A 645-amino-acid chain; its full sequence is MPVITLPDGSQRSFSNPVTVMQVAEDIGPGLAKATVAGRIDGQLVDACELISDDAKLSIITGKDPEGVEIIRHSFAHLVGHAVKQLYPTAQMAIGPVIDEGFYYDIAYERPFTPDDLAAIEKRIAELVKTDYDVVKRMTPIAEARQQFVDRGESYKVALIDDMDESTKEVGLYYHEEYMDMCRGPHVPNTRVLRHFKLMKLAGAYWRGDSNNEMLQRIYGTAWNDKKELKGYLTRIEEAEKRDHRKLGKKLDLFHVQEEAPGMVFWHPKGWRLYQAVEQYMRQKQLDNNYQEVKTPQIVDRVLWEKSGHWGKYHENMFTTHSENRDYAVKPMNCPCHIQVYNQGLKSYRDLPFRMAEFGSCHRNEPSGALHGIMRVRNFVQDDGHIFVTEGQIQQEVSEFIDLLHEVYADFGFDNIVYRLSTRPEQRVGSDEVWDKAEKALSEALDSAGLDWEELPGEGAFYGPKIEFSLKDAIGRVWQCGTIQVDFSMPTRLGAQYVSEDGSRQTPVMLHRAIVGSLERFIGILIEDTEGAFPVWLAPEQVVIMNITDRQADYCSVLEKRLNSNGFRAKLDLRNEKIGFKIREHTLQRVPYMIVVGDKEVEQEQVAVRTRTGEDLGVMSISDFEGLLQQEIARRSRKQEVEIVL.

Residues 1-61 (MPVITLPDGS…SDDAKLSIIT (61 aa)) enclose the TGS domain. A catalytic region spans residues 243-534 (DHRKLGKKLD…LIEDTEGAFP (292 aa)). The Zn(2+) site is built by Cys-334, His-385, and His-511.

This sequence belongs to the class-II aminoacyl-tRNA synthetase family. Homodimer. Requires Zn(2+) as cofactor.

The protein localises to the cytoplasm. It catalyses the reaction tRNA(Thr) + L-threonine + ATP = L-threonyl-tRNA(Thr) + AMP + diphosphate + H(+). Functionally, catalyzes the attachment of threonine to tRNA(Thr) in a two-step reaction: L-threonine is first activated by ATP to form Thr-AMP and then transferred to the acceptor end of tRNA(Thr). Also edits incorrectly charged L-seryl-tRNA(Thr). The polypeptide is Threonine--tRNA ligase (Marinomonas sp. (strain MWYL1)).